Consider the following 227-residue polypeptide: Cytochrome c oxidase subunit 2 (227 aa).

At Met1 to Ser14 the chain is on the mitochondrial intermembrane side. Residues Pro15–Met45 form a helical membrane-spanning segment. Residues Leu46 to Gln59 lie on the Mitochondrial matrix side of the membrane. Residues Glu60 to Met87 traverse the membrane as a helical segment. Residues Asp88 to Leu227 are Mitochondrial intermembrane-facing. Cu cation contacts are provided by His161, Cys196, Glu198, Cys200, His204, and Met207. Glu198 provides a ligand contact to Mg(2+). Tyr218 bears the Phosphotyrosine mark.

The protein belongs to the cytochrome c oxidase subunit 2 family. In terms of assembly, component of the cytochrome c oxidase (complex IV, CIV), a multisubunit enzyme composed of 14 subunits. The complex is composed of a catalytic core of 3 subunits MT-CO1, MT-CO2 and MT-CO3, encoded in the mitochondrial DNA, and 11 supernumerary subunits COX4I, COX5A, COX5B, COX6A, COX6B, COX6C, COX7A, COX7B, COX7C, COX8 and NDUFA4, which are encoded in the nuclear genome. The complex exists as a monomer or a dimer and forms supercomplexes (SCs) in the inner mitochondrial membrane with NADH-ubiquinone oxidoreductase (complex I, CI) and ubiquinol-cytochrome c oxidoreductase (cytochrome b-c1 complex, complex III, CIII), resulting in different assemblies (supercomplex SCI(1)III(2)IV(1) and megacomplex MCI(2)III(2)IV(2)). Found in a complex with TMEM177, COA6, COX18, COX20, SCO1 and SCO2. Interacts with TMEM177 in a COX20-dependent manner. Interacts with COX20. Interacts with COX16. It depends on Cu cation as a cofactor.

Its subcellular location is the mitochondrion inner membrane. It catalyses the reaction 4 Fe(II)-[cytochrome c] + O2 + 8 H(+)(in) = 4 Fe(III)-[cytochrome c] + 2 H2O + 4 H(+)(out). Its function is as follows. Component of the cytochrome c oxidase, the last enzyme in the mitochondrial electron transport chain which drives oxidative phosphorylation. The respiratory chain contains 3 multisubunit complexes succinate dehydrogenase (complex II, CII), ubiquinol-cytochrome c oxidoreductase (cytochrome b-c1 complex, complex III, CIII) and cytochrome c oxidase (complex IV, CIV), that cooperate to transfer electrons derived from NADH and succinate to molecular oxygen, creating an electrochemical gradient over the inner membrane that drives transmembrane transport and the ATP synthase. Cytochrome c oxidase is the component of the respiratory chain that catalyzes the reduction of oxygen to water. Electrons originating from reduced cytochrome c in the intermembrane space (IMS) are transferred via the dinuclear copper A center (CU(A)) of subunit 2 and heme A of subunit 1 to the active site in subunit 1, a binuclear center (BNC) formed by heme A3 and copper B (CU(B)). The BNC reduces molecular oxygen to 2 water molecules using 4 electrons from cytochrome c in the IMS and 4 protons from the mitochondrial matrix. In Bubalus depressicornis (Lowland anoa), this protein is Cytochrome c oxidase subunit 2 (MT-CO2).